Reading from the N-terminus, the 476-residue chain is Glycogen synthase (476 aa).

Residue lysine 15 participates in ADP-alpha-D-glucose binding.

The protein belongs to the glycosyltransferase 1 family. Bacterial/plant glycogen synthase subfamily.

The catalysed reaction is [(1-&gt;4)-alpha-D-glucosyl](n) + ADP-alpha-D-glucose = [(1-&gt;4)-alpha-D-glucosyl](n+1) + ADP + H(+). It functions in the pathway glycan biosynthesis; glycogen biosynthesis. In terms of biological role, synthesizes alpha-1,4-glucan chains using ADP-glucose. The protein is Glycogen synthase of Yersinia pseudotuberculosis serotype O:1b (strain IP 31758).